Here is a 205-residue protein sequence, read N- to C-terminus: High frequency lysogenization protein HflD homolog (205 aa).

Belongs to the HflD family.

It is found in the cytoplasm. Its subcellular location is the cell inner membrane. The sequence is that of High frequency lysogenization protein HflD homolog from Haemophilus influenzae (strain 86-028NP).